A 289-amino-acid polypeptide reads, in one-letter code: ATP synthase gamma chain (289 aa).

The protein belongs to the ATPase gamma chain family. F-type ATPases have 2 components, CF(1) - the catalytic core - and CF(0) - the membrane proton channel. CF(1) has five subunits: alpha(3), beta(3), gamma(1), delta(1), epsilon(1). CF(0) has three main subunits: a, b and c.

The protein resides in the cell membrane. Produces ATP from ADP in the presence of a proton gradient across the membrane. The gamma chain is believed to be important in regulating ATPase activity and the flow of protons through the CF(0) complex. This Lactococcus lactis subsp. cremoris (strain SK11) protein is ATP synthase gamma chain.